A 1090-amino-acid polypeptide reads, in one-letter code: Vinculin (1090 aa).

Tandem repeats lie at residues 339-446 (DADN…SQNS) and 455-561 (QNAQ…DLGD). A 2 X repeats region spans residues 339–561 (DADNVTVMRK…LKNALRDLGD (223 aa)). Disordered regions lie at residues 811 to 842 (GVPM…SQVI) and 864 to 895 (DIPA…EEET). Over residues 817 to 830 (GRHSSYQESISRAS) the composition is skewed to polar residues. Residues 866-887 (PAPPRPPPPVELSPPPRPPPPP) show a composition bias toward pro residues.

Belongs to the vinculin/alpha-catenin family. In terms of assembly, may interact with sorb-1. As to expression, expressed in gonadal sheath cells and the spermatheca. Expressed in body wall muscles.

The protein resides in the cytoplasm. Its subcellular location is the cytoskeleton. It localises to the cell junction. It is found in the adherens junction. The protein localises to the cell membrane. The protein resides in the focal adhesion. Its function is as follows. Involved in cell adhesion. May be involved in the attachment of the actin-based microfilaments to the plasma membrane. Involved in ovulation. In Caenorhabditis elegans, this protein is Vinculin.